The primary structure comprises 791 residues: Probable phosphoketolase (791 aa).

The protein belongs to the XFP family. It depends on thiamine diphosphate as a cofactor.

This Pseudomonas putida (strain ATCC 700007 / DSM 6899 / JCM 31910 / BCRC 17059 / LMG 24140 / F1) protein is Probable phosphoketolase.